We begin with the raw amino-acid sequence, 72 residues long: N-alpha-acetyltransferase 38, NatC auxiliary subunit (72 aa).

The Sm domain occupies 3-72 (NGEILLTSWL…KHIKSFSVRA (70 aa)).

In terms of assembly, component of the N-terminal acetyltransferase C (NatC) complex, composed of the catalytic subunit Naa30, a large auxiliary subunit Naa35 and a small auxiliary subunit Naa38.

The protein resides in the endoplasmic reticulum. Functionally, component of the NatC N-terminal acetyltransferase, which associates with the ribosome to acetylate nascent protein chains in a cotranslational manner. NatC acetylates protein N-termini starting with methionine, followed by a hydrophobic or amphipathic amino acid, with amino acids at positions 3 and 4 also contributing to NatC recognition. The first 4 amino acids of cognate substrates are recognized at the Naa30-Naa35 interface. NatC-dependent acetylation targets various substrate proteins to specific subcellular sites. The chain is N-alpha-acetyltransferase 38, NatC auxiliary subunit (naa38) from Schizosaccharomyces pombe (strain 972 / ATCC 24843) (Fission yeast).